Consider the following 212-residue polypeptide: LexA repressor (212 aa).

A DNA-binding region (H-T-H motif) is located at residues 29-49 (VREIGEAVGLSSSSTIHGHIE). Residues S133 and K171 each act as for autocatalytic cleavage activity in the active site.

It belongs to the peptidase S24 family. Homodimer.

It carries out the reaction Hydrolysis of Ala-|-Gly bond in repressor LexA.. In terms of biological role, represses a number of genes involved in the response to DNA damage (SOS response), including recA and lexA. In the presence of single-stranded DNA, RecA interacts with LexA causing an autocatalytic cleavage which disrupts the DNA-binding part of LexA, leading to derepression of the SOS regulon and eventually DNA repair. This is LexA repressor from Leuconostoc mesenteroides subsp. mesenteroides (strain ATCC 8293 / DSM 20343 / BCRC 11652 / CCM 1803 / JCM 6124 / NCDO 523 / NBRC 100496 / NCIMB 8023 / NCTC 12954 / NRRL B-1118 / 37Y).